The sequence spans 252 residues: 5-oxoprolinase subunit A (252 aa).

This sequence belongs to the LamB/PxpA family. As to quaternary structure, forms a complex composed of PxpA, PxpB and PxpC.

It catalyses the reaction 5-oxo-L-proline + ATP + 2 H2O = L-glutamate + ADP + phosphate + H(+). In terms of biological role, catalyzes the cleavage of 5-oxoproline to form L-glutamate coupled to the hydrolysis of ATP to ADP and inorganic phosphate. The polypeptide is 5-oxoprolinase subunit A (Mycobacterium avium (strain 104)).